The chain runs to 417 residues: Serine hydroxymethyltransferase (417 aa).

Residues leucine 121 and 125–127 (GHL) each bind (6S)-5,6,7,8-tetrahydrofolate. An N6-(pyridoxal phosphate)lysine modification is found at lysine 229. 355–357 (SSF) serves as a coordination point for (6S)-5,6,7,8-tetrahydrofolate.

Belongs to the SHMT family. As to quaternary structure, homodimer. Pyridoxal 5'-phosphate serves as cofactor.

Its subcellular location is the cytoplasm. It carries out the reaction (6R)-5,10-methylene-5,6,7,8-tetrahydrofolate + glycine + H2O = (6S)-5,6,7,8-tetrahydrofolate + L-serine. The protein operates within one-carbon metabolism; tetrahydrofolate interconversion. It participates in amino-acid biosynthesis; glycine biosynthesis; glycine from L-serine: step 1/1. Functionally, catalyzes the reversible interconversion of serine and glycine with tetrahydrofolate (THF) serving as the one-carbon carrier. This reaction serves as the major source of one-carbon groups required for the biosynthesis of purines, thymidylate, methionine, and other important biomolecules. Also exhibits THF-independent aldolase activity toward beta-hydroxyamino acids, producing glycine and aldehydes, via a retro-aldol mechanism. The polypeptide is Serine hydroxymethyltransferase (Baumannia cicadellinicola subsp. Homalodisca coagulata).